The sequence spans 336 residues: Cell division protein ZipA (336 aa).

The Periplasmic segment spans residues 1-6 (MMQDLR). The chain crosses the membrane as a helical span at residues 7 to 27 (LILIVVGAIAIIALLLHGLWT). Over 28–336 (SRKERSSLFR…RIRDVLKANA (309 aa)) the chain is Cytoplasmic. Residues 40 to 51 (PVKRAKKARDET) show a composition bias toward basic and acidic residues. The disordered stretch occupies residues 40 to 190 (PVKRAKKARD…APAQPQQPAE (151 aa)). Residues 76–89 (SFSSSSFDNASFDN) are compositionally biased toward low complexity. Residues 126-138 (PRSQVRGDSNPQV) are compositionally biased toward polar residues. Residues 179 to 190 (QPAPAQPQQPAE) are compositionally biased toward low complexity.

This sequence belongs to the ZipA family. Interacts with FtsZ via their C-terminal domains.

The protein resides in the cell inner membrane. Functionally, essential cell division protein that stabilizes the FtsZ protofilaments by cross-linking them and that serves as a cytoplasmic membrane anchor for the Z ring. Also required for the recruitment to the septal ring of downstream cell division proteins. This Pectobacterium carotovorum subsp. carotovorum (strain PC1) protein is Cell division protein ZipA.